Reading from the N-terminus, the 77-residue chain is Acyl carrier protein (77 aa).

Positions Ser2 to Gln77 constitute a Carrier domain. Ser37 carries the O-(pantetheine 4'-phosphoryl)serine modification.

It belongs to the acyl carrier protein (ACP) family. In terms of processing, 4'-phosphopantetheine is transferred from CoA to a specific serine of apo-ACP by AcpS. This modification is essential for activity because fatty acids are bound in thioester linkage to the sulfhydryl of the prosthetic group.

Its subcellular location is the cytoplasm. It participates in lipid metabolism; fatty acid biosynthesis. Carrier of the growing fatty acid chain in fatty acid biosynthesis. This is Acyl carrier protein from Jannaschia sp. (strain CCS1).